Here is a 488-residue protein sequence, read N- to C-terminus: Neisserial heparin binding antigen (488 aa).

An N-terminal signal peptide occupies residues 1 to 17 (MFKRSVIAMACIFALSA). Cys-18 carries N-palmitoyl cysteine lipidation. Cys-18 carries S-diacylglycerol cysteine lipidation. The interval 21 to 201 (GGGGSPDVKS…NPAPANGGSN (181 aa)) is disordered. Positions 43-53 (SEKETEAKEDA) are enriched in basic and acidic residues. Residues 54 to 70 (PQAGSQGQGAPSAQGSQ) are compositionally biased toward low complexity. Polar residues-rich tracts occupy residues 101 to 118 (DMPQ…NHTP) and 127 to 142 (MENQ…QPAN). A compositionally biased stretch (low complexity) spans 160 to 183 (AGGQNAGNTAAQGANQAGNNQAAG). Residues 296-306 (RFRRSARSRRS) carry the Arg-rich motif motif. A C1 fragment region spans residues 306–488 (SLPAEMPLIP…GVFAGKKEQD (183 aa)).

It belongs to the NHBA family. As to quaternary structure, the C-terminal beta-barrel forms a monomer. Post-translationally, cleaved in vivo by the Neisserial phase-variable autotransporter/serine protease NalP to give 2 fragments. The N-terminus remains in the cell outer membrane while the 22 kDa C-terminus (beginning on Ser-293) is soluble; this soluble fragment is called C2. Cleaved in vitro by human lactoferrin (LTF, between Arg-305 and Ser-306), this fragment is called C1. Cleavage by NalP or lactoferrin does not alter killing of Neisseria by bactericidal antibodies in vitro. Recombinant and cell surface protein is cleaved by human saliva kallikrein (KLK1) between Ser-303 and Arg-304; in saliva kallikrein is more active on NHBA than lactoferrin. Human plasma kallikrein (KLKB1) cleaves in a similar manner to KLK1.

It is found in the cell outer membrane. The protein localises to the cell surface. Its subcellular location is the host mitochondrion. In terms of biological role, a major human immunogenic protein detected in patients recovering from meningitidis, where it induces bactericidal antibodies. Binds heparin and heparan sulfate proteoglycan in vitro via the Arg-rich motif. Heparin-binding to this protein protects bacteria against killing by bactericidal antibodies (serum killing). Binds to human cells via the Arg-rich region; binding may require the intact protein as protein fragments do not bind to human cells. Protein binding to human cells is abolished by treatment with heparinase III but not chondroitinase ABC. The bacteria binds a number of human extracellular sialyated and/or sulfated glycans via this protein, including chondroitin sulfate (KD=5.2 nM), heparin (KD=52 nM) and ganglioside GT3 (KD=210 nM). The recombinant protein binds DNA non-specifically. Its function is as follows. Plays a role in extracellular-DNA (eDNA) mediated biofilm formation. In strain MC58 eDNA stimulates biofilm formation. When NHBA is not processed by NalP there is an increase in positively charged, NHBA- and IgA-derived DNA-binding peptides on the cell surface, resulting in increased DNA-binding peptides and increased biofilm formation. [C2 fragment] Localizes to host mitochondria when applied to the apical side of human endothelial cell layers, where it induces production of reactive oxygen species which lead to increased permeability of host endothelial cells. The C1 fragment (which lacks the first 14 residues of C2) does not have this effect. It is not known if this occurs during Neisseria infections. The sequence is that of Neisserial heparin binding antigen from Neisseria meningitidis serogroup B (strain ATCC BAA-335 / MC58).